Reading from the N-terminus, the 396-residue chain is Interactor of constitutive active ROPs 5 (396 aa).

Disordered stretches follow at residues 1 to 49 (MQTP…TQIP) and 99 to 122 (ALKREAQEEAEDAKHQLMDINASE). 2 coiled-coil regions span residues 67–124 (KKRT…SEDS) and 158–366 (LSSA…TAAS). Positions 99-115 (ALKREAQEEAEDAKHQL) are enriched in basic and acidic residues.

It belongs to the ICR family. In terms of assembly, component of the active ARAC10-IRC5-KIN13A complex. Homooligomer. Interacts (via C-terminus) with ARAC4, ARAC10, ARAC11 and (via N-terminus) with KIN13A (via C-terminus), but no interactions with SEC3A. As to expression, expressed in xylem cells in the roots and in stamens, petals and pollen.

It localises to the cell membrane. Its subcellular location is the cytoplasm. The protein resides in the cytoskeleton. Its function is as follows. ROP effector binding specifically activated ROPs and linking them to the microtubule cytoskeleton. Involved in ROP-regulated polar growth. Involved in local disassembly of cortical microtubules when associated with ARAC10 and KIN13A and conversely also mediates the elimination of ARAC10 from the plasma membrane by the cortical microtubules. Accumulates at the plus end of shrinking microtubules. Targets KIN13A to microtubules. This is Interactor of constitutive active ROPs 5 (ICR5) from Arabidopsis thaliana (Mouse-ear cress).